The primary structure comprises 185 residues: Ribosome-recycling factor (185 aa).

It belongs to the RRF family.

The protein localises to the cytoplasm. Its function is as follows. Responsible for the release of ribosomes from messenger RNA at the termination of protein biosynthesis. May increase the efficiency of translation by recycling ribosomes from one round of translation to another. In Frankia alni (strain DSM 45986 / CECT 9034 / ACN14a), this protein is Ribosome-recycling factor.